The sequence spans 830 residues: Lon protease (830 aa).

Positions M1 to E28 are disordered. Positions I50–A245 constitute a Lon N-terminal domain. G397–T404 contributes to the ATP binding site. One can recognise a Lon proteolytic domain in the interval T633–E814. Residues S720 and K763 contribute to the active site.

It belongs to the peptidase S16 family. As to quaternary structure, homohexamer. Organized in a ring with a central cavity.

Its subcellular location is the cytoplasm. The enzyme catalyses Hydrolysis of proteins in presence of ATP.. Its function is as follows. ATP-dependent serine protease that mediates the selective degradation of mutant and abnormal proteins as well as certain short-lived regulatory proteins. Required for cellular homeostasis and for survival from DNA damage and developmental changes induced by stress. Degrades polypeptides processively to yield small peptide fragments that are 5 to 10 amino acids long. Binds to DNA in a double-stranded, site-specific manner. In Lawsonia intracellularis (strain PHE/MN1-00), this protein is Lon protease.